Here is a 501-residue protein sequence, read N- to C-terminus: Vitamin D 25-hydroxylase (501 aa).

A substrate-binding site is contributed by Ala-250. Cys-448 contributes to the heme binding site.

This sequence belongs to the cytochrome P450 family. In terms of assembly, homodimer. The cofactor is heme. Highly expressed in the liver and testis.

The protein resides in the endoplasmic reticulum membrane. It localises to the microsome membrane. The catalysed reaction is calciol + reduced [NADPH--hemoprotein reductase] + O2 = calcidiol + oxidized [NADPH--hemoprotein reductase] + H2O + H(+). It catalyses the reaction vitamin D2 + reduced [NADPH--hemoprotein reductase] + O2 = 25-hydroxyvitamin D2 + oxidized [NADPH--hemoprotein reductase] + H2O + H(+). It carries out the reaction 1alpha-hydroxyvitamin D2 + reduced [NADPH--hemoprotein reductase] + O2 = 1alpha,25-dihydroxyvitamin D2 + oxidized [NADPH--hemoprotein reductase] + H2O + H(+). The enzyme catalyses alfacalcidol + reduced [NADPH--hemoprotein reductase] + O2 = calcitriol + oxidized [NADPH--hemoprotein reductase] + H2O + H(+). It functions in the pathway hormone biosynthesis; vitamin D biosynthesis. A cytochrome P450 monooxygenase involved in activation of vitamin D precursors. Catalyzes hydroxylation at C-25 of both forms of vitamin D, vitamin D(2) and D(3) (calciol). Can metabolize vitamin D analogs/prodrugs 1alpha-hydroxyvitamin D(2) (doxercalciferol) and 1alpha-hydroxyvitamin D(3) (alfacalcidol) forming 25-hydroxy derivatives. Mechanistically, uses molecular oxygen inserting one oxygen atom into a substrate, and reducing the second into a water molecule, with two electrons provided by NADPH via cytochrome P450 reductase (CPR; NADPH-ferrihemoprotein reductase). This chain is Vitamin D 25-hydroxylase (Cyp2r1), found in Mus musculus (Mouse).